Reading from the N-terminus, the 306-residue chain is Non-specific ribonucleoside hydrolase RihC (306 aa).

The active site involves H235.

Belongs to the IUNH family. RihC subfamily.

In terms of biological role, hydrolyzes both purine and pyrimidine ribonucleosides with a broad-substrate specificity. This is Non-specific ribonucleoside hydrolase RihC from Salmonella heidelberg (strain SL476).